A 313-amino-acid chain; its full sequence is 3-ketodihydrosphingosine reductase TSC10 (313 aa).

Position 12 (Leu12) interacts with NADP(+). NADPH is bound by residues Gly15, Ser17, and Gly19. A GXSXG motif is present at residues 15–19 (GGSQG). Leu20 is a binding site for NADP(+). The NADPH site is built by Arg47, Lys51, and Asp86. NADP(+) is bound at residue Asp86. Ser160 (proton donor) is an active-site residue. Tyr174, Lys178, and Ser207 together coordinate NADP(+). The active-site Proton acceptor is Tyr174. Lys178 serves as the catalytic Lowers pKa of active site Tyr. The chain crosses the membrane as a helical span at residues 278–298 (VFSWILGALLNITIVPIYMLI).

The protein belongs to the short-chain dehydrogenases/reductases (SDR) family.

It is found in the endoplasmic reticulum membrane. It catalyses the reaction sphinganine + NADP(+) = 3-oxosphinganine + NADPH + H(+). The protein operates within lipid metabolism; sphingolipid metabolism. In terms of biological role, catalyzes the reduction of 3'-oxosphinganine (3-ketodihydrosphingosine/KDS) to sphinganine (dihydrosphingosine/DHS), the second step of de novo sphingolipid biosynthesis. The sequence is that of 3-ketodihydrosphingosine reductase TSC10 (TSC10) from Kluyveromyces lactis (strain ATCC 8585 / CBS 2359 / DSM 70799 / NBRC 1267 / NRRL Y-1140 / WM37) (Yeast).